Reading from the N-terminus, the 101-residue chain is NADH-quinone oxidoreductase subunit K (101 aa).

3 consecutive transmembrane segments (helical) span residues 4–24 (LTHF…GIFL), 30–50 (IILL…FIAF), and 61–81 (IFVF…LAIL).

This sequence belongs to the complex I subunit 4L family. NDH-1 is composed of 14 different subunits. Subunits NuoA, H, J, K, L, M, N constitute the membrane sector of the complex.

Its subcellular location is the cell inner membrane. The enzyme catalyses a quinone + NADH + 5 H(+)(in) = a quinol + NAD(+) + 4 H(+)(out). NDH-1 shuttles electrons from NADH, via FMN and iron-sulfur (Fe-S) centers, to quinones in the respiratory chain. The immediate electron acceptor for the enzyme in this species is believed to be ubiquinone. Couples the redox reaction to proton translocation (for every two electrons transferred, four hydrogen ions are translocated across the cytoplasmic membrane), and thus conserves the redox energy in a proton gradient. In Chromobacterium violaceum (strain ATCC 12472 / DSM 30191 / JCM 1249 / CCUG 213 / NBRC 12614 / NCIMB 9131 / NCTC 9757 / MK), this protein is NADH-quinone oxidoreductase subunit K.